The following is a 294-amino-acid chain: 4-hydroxy-tetrahydrodipicolinate synthase (294 aa).

Thr-47 is a pyruvate binding site. Tyr-136 serves as the catalytic Proton donor/acceptor. Lys-164 acts as the Schiff-base intermediate with substrate in catalysis. Position 206 (Val-206) interacts with pyruvate.

This sequence belongs to the DapA family. As to quaternary structure, homotetramer; dimer of dimers.

Its subcellular location is the cytoplasm. The enzyme catalyses L-aspartate 4-semialdehyde + pyruvate = (2S,4S)-4-hydroxy-2,3,4,5-tetrahydrodipicolinate + H2O + H(+). Its pathway is amino-acid biosynthesis; L-lysine biosynthesis via DAP pathway; (S)-tetrahydrodipicolinate from L-aspartate: step 3/4. In terms of biological role, catalyzes the condensation of (S)-aspartate-beta-semialdehyde [(S)-ASA] and pyruvate to 4-hydroxy-tetrahydrodipicolinate (HTPA). This is 4-hydroxy-tetrahydrodipicolinate synthase from Nostoc punctiforme (strain ATCC 29133 / PCC 73102).